A 251-amino-acid chain; its full sequence is MNMEIRHLGRVDYLPTYEAMQAFTLERTAATPNSLWICEHPPVYTQGLAGKIEHVLNPGDIPVVQTNRGGQVTYHGPGQVVAYPLIDLKQAGYYVKEYVYRIEEAVIRTLSHFGVTGHRVPGAPGIYVRLDDPFSHARLRPSPQPSPKGRGSSTPVLLPPLPGEGGGGGGPDPDPFHSLGKIAALGIKVSRHCTYHGVALNVAMDLEPFSRINPCGYAGLKTVDLRTIGVSVTWQEAADVLGQKLSSYLAP.

The 223-residue stretch at 29–251 (AATPNSLWIC…GQKLSSYLAP (223 aa)) folds into the BPL/LPL catalytic domain. 68-75 (RGGQVTYH) lines the substrate pocket. Positions 137 to 174 (ARLRPSPQPSPKGRGSSTPVLLPPLPGEGGGGGGPDPD) are disordered. Residues 184–186 (ALG) and 197–199 (GVA) contribute to the substrate site. The active-site Acyl-thioester intermediate is C215.

This sequence belongs to the LipB family.

It is found in the cytoplasm. The enzyme catalyses octanoyl-[ACP] + L-lysyl-[protein] = N(6)-octanoyl-L-lysyl-[protein] + holo-[ACP] + H(+). It participates in protein modification; protein lipoylation via endogenous pathway; protein N(6)-(lipoyl)lysine from octanoyl-[acyl-carrier-protein]: step 1/2. Functionally, catalyzes the transfer of endogenously produced octanoic acid from octanoyl-acyl-carrier-protein onto the lipoyl domains of lipoate-dependent enzymes. Lipoyl-ACP can also act as a substrate although octanoyl-ACP is likely to be the physiological substrate. The sequence is that of Octanoyltransferase from Polaromonas sp. (strain JS666 / ATCC BAA-500).